The sequence spans 491 residues: Glutamyl-tRNA(Gln) amidotransferase subunit A (491 aa).

Active-site charge relay system residues include Lys-79 and Ser-154. Catalysis depends on Ser-178, which acts as the Acyl-ester intermediate.

This sequence belongs to the amidase family. GatA subfamily. In terms of assembly, heterotrimer of A, B and C subunits.

It carries out the reaction L-glutamyl-tRNA(Gln) + L-glutamine + ATP + H2O = L-glutaminyl-tRNA(Gln) + L-glutamate + ADP + phosphate + H(+). In terms of biological role, allows the formation of correctly charged Gln-tRNA(Gln) through the transamidation of misacylated Glu-tRNA(Gln) in organisms which lack glutaminyl-tRNA synthetase. The reaction takes place in the presence of glutamine and ATP through an activated gamma-phospho-Glu-tRNA(Gln). The chain is Glutamyl-tRNA(Gln) amidotransferase subunit A from Synechococcus sp. (strain CC9605).